The primary structure comprises 129 residues: Small ribosomal subunit protein uS11 (129 aa).

This sequence belongs to the universal ribosomal protein uS11 family. As to quaternary structure, part of the 30S ribosomal subunit. Interacts with proteins S7 and S18. Binds to IF-3.

Located on the platform of the 30S subunit, it bridges several disparate RNA helices of the 16S rRNA. Forms part of the Shine-Dalgarno cleft in the 70S ribosome. The sequence is that of Small ribosomal subunit protein uS11 from Geobacillus thermodenitrificans (strain NG80-2).